Here is a 325-residue protein sequence, read N- to C-terminus: Glycerol-3-phosphate dehydrogenase [NAD(P)+] (325 aa).

NADPH is bound by residues tryptophan 11, arginine 30, and lysine 103. The sn-glycerol 3-phosphate site is built by lysine 103, glycine 131, and serine 133. Alanine 135 contacts NADPH. 5 residues coordinate sn-glycerol 3-phosphate: lysine 186, aspartate 242, serine 252, arginine 253, and asparagine 254. Lysine 186 (proton acceptor) is an active-site residue. Arginine 253 lines the NADPH pocket. Residues valine 279 and glutamate 281 each contribute to the NADPH site.

The protein belongs to the NAD-dependent glycerol-3-phosphate dehydrogenase family.

The protein localises to the cytoplasm. The catalysed reaction is sn-glycerol 3-phosphate + NAD(+) = dihydroxyacetone phosphate + NADH + H(+). The enzyme catalyses sn-glycerol 3-phosphate + NADP(+) = dihydroxyacetone phosphate + NADPH + H(+). Its pathway is membrane lipid metabolism; glycerophospholipid metabolism. Its function is as follows. Catalyzes the reduction of the glycolytic intermediate dihydroxyacetone phosphate (DHAP) to sn-glycerol 3-phosphate (G3P), the key precursor for phospholipid synthesis. The chain is Glycerol-3-phosphate dehydrogenase [NAD(P)+] from Wolbachia pipientis subsp. Culex pipiens (strain wPip).